A 758-amino-acid chain; its full sequence is Zinc finger protein VAR3, chloroplastic (758 aa).

The 3 X approximate repeat stretch occupies residues 122–502 (FPGFPDELLR…PKEETQIGLI (381 aa)). RanBP2-type zinc fingers lie at residues 276 to 305 (KRGDWICSRCSGMNFARNVKCFQCDEARPK) and 308 to 338 (LTGSEWECPQCDFYNYGRNVACLRCDCKRPR). The stretch at 368-415 (RWLSKVAQGGSDANSVDTDEDFPEIMPLRKGVNRYVVSTRKPPLERRL) is repeat 1. Disordered regions lie at residues 410–470 (PLER…RFES), 512–545 (GGNQNVYQEDKSDANHSGKETDRLEKEDHKSEEP), 572–606 (EKMPMRKGENRFVVSRKKDRSLTSPAYKRPEDSDF), 629–654 (TLPAPATENVSQVVQQEPREPSINKS), and 727–758 (KRKTPLERRLTSQRHQRNPHITNSDPTGKGDK). Basic and acidic residues-rich tracts occupy residues 457–469 (RSDDKNVSSRRFE), 519–545 (QEDKSDANHSGKETDRLEKEDHKSEEP), and 572–581 (EKMPMRKGEN). Residues 547–596 (RWFKRVTELHNVSDLESAIPQEISPEKMPMRKGENRFVVSRKKDRSLTSP) form repeat 2. Repeat 3 spans residues 688–736 (RWFKRVAEIKNISELSEIPDEDFPSIMPMRKGVNRFVVSKRKTPLERRL).

Interacts in vitro with the chloroplast-located protein CCD4/NCED4. Homodimer. Interacts with ORRM1. Interacts with PCMP-H51/CRR28 and PCMP-H12/OTP82. Interacts with ORRM6. In terms of tissue distribution, weakly expressed in leaves and roots.

The protein resides in the plastid. It localises to the chloroplast. Its function is as follows. Probable component of some protein complex required for chloroplast and palisade cell development. Involved in C-to-U editing of chloroplastic RNA. Controls a large number of chloroplastic editing sites. Binds the editing recognition trans-factors PCMP-H51/CRR28 and PCMP-H12/OTP82. The chain is Zinc finger protein VAR3, chloroplastic from Arabidopsis thaliana (Mouse-ear cress).